Consider the following 295-residue polypeptide: Defective in cullin neddylation protein 1 (295 aa).

The region spanning Gln8–Phe45 is the UBA-like domain. Residues Val60–Arg272 enclose the DCUN1 domain.

Interacts with the cullin cul-3. Interacts with ubiquitin via its UBA-like domain. Interacts with ned-8/nedd8.

The protein localises to the nucleus. Functionally, required for neddylation of cullin components of SCF-type E3 ubiquitin ligase complexes. Neddylation of cullins play an essential role in the regulation of SCF-type complexes activity. Does not act by preventing deneddylation, but rather facilitates neddylation, possibly by acting with rbx-1 to recruit the Nedd8-charged E2 enzyme to the cullin component of SCF-type complexes. The chain is Defective in cullin neddylation protein 1 (dcn-1) from Caenorhabditis elegans.